Reading from the N-terminus, the 182-residue chain is Dual-action ribosomal maturation protein DarP (182 aa).

Positions 1–25 (MEENLADNSEREARPSKTKRKKEMH) are disordered.

Belongs to the DarP family.

The protein resides in the cytoplasm. Member of a network of 50S ribosomal subunit biogenesis factors which assembles along the 30S-50S interface, preventing incorrect 23S rRNA structures from forming. Promotes peptidyl transferase center (PTC) maturation. This chain is Dual-action ribosomal maturation protein DarP, found in Nitrosospira multiformis (strain ATCC 25196 / NCIMB 11849 / C 71).